Consider the following 300-residue polypeptide: Ribosomal RNA small subunit methyltransferase H (300 aa).

S-adenosyl-L-methionine is bound by residues 33–35, D53, F78, D97, and Q104; that span reads GGH.

Belongs to the methyltransferase superfamily. RsmH family.

Its subcellular location is the cytoplasm. It catalyses the reaction cytidine(1402) in 16S rRNA + S-adenosyl-L-methionine = N(4)-methylcytidine(1402) in 16S rRNA + S-adenosyl-L-homocysteine + H(+). In terms of biological role, specifically methylates the N4 position of cytidine in position 1402 (C1402) of 16S rRNA. This is Ribosomal RNA small subunit methyltransferase H from Karelsulcia muelleri (strain GWSS) (Sulcia muelleri).